A 139-amino-acid chain; its full sequence is UPF0216 protein MJ1224 (139 aa).

It belongs to the UPF0216 family.

The sequence is that of UPF0216 protein MJ1224 from Methanocaldococcus jannaschii (strain ATCC 43067 / DSM 2661 / JAL-1 / JCM 10045 / NBRC 100440) (Methanococcus jannaschii).